A 285-amino-acid polypeptide reads, in one-letter code: K88 fimbrial protein AB (285 aa).

The first 21 residues, 1 to 21 (MKKTLIALAIAASAASGMAHA), serve as a signal peptide directing secretion.

It belongs to the fimbrial K88 protein family. In terms of assembly, K88 fimbria, 0.1-1 micrometer in length and 7 nanometers in diameter, is composed of about 100 identical subunits.

Its subcellular location is the fimbrium. Functionally, K88 major fimbrial subunit. Fimbriae (also called pili), are polar filaments radiating from the surface of the bacterium to a length of 0.5-1.5 micrometers and numbering 100-300 per cell. They enable bacteria to colonize the epithelium of specific host organs. The polypeptide is K88 fimbrial protein AB (faeG) (Escherichia coli).